A 512-amino-acid polypeptide reads, in one-letter code: MLLARLAQVSREVAATSARSRKTVLLAELFREAEAADVPVVIPYLAGRLPQGRIGVGWKVLSRRVPPADAPTLTVRDVDARLTRLGAVSGAGSQAERTRLVGELMGAATEDEQRFLIGLLTGEVRQGALDAAAVEGLAAATDAPPADVRRAVMLAGSLQTVAEALLADGPGALDRFRLTVGQPVLPMLAHSASSVAEAVGKLGAAAVEEKLDGIRVQVHRDGGTVRIYTRTLDDITDRLPEVTEAALALPGERFILDGEAISLDADGRPRSFQETAGRVGSRTDVATAARAVPVSAVFFDVLSVDGRDLLDLPLTERHAELARLVPEPLRVRRTLVHGPEDTGAAEEFLARTLARGHEGVVVKGLDAAYSAGRRGASWLKVKPVHTLDLVVLAAEWGHGRRTGKLSNLHLGARTADGSFAMLGKTFKGMTDALLTWQTERLKELAVEEHGWGVTVRPELVVEIAYDGLQRSTRYPAGVTLRFARVVRYREDKRPEDADTVDTLLAAHPGVAP.

E208 serves as a coordination point for ATP. K210 functions as the N6-AMP-lysine intermediate in the catalytic mechanism. ATP is bound by residues R215, R230, E259, F299, R374, and K380.

The protein belongs to the ATP-dependent DNA ligase family. It depends on Mg(2+) as a cofactor.

It carries out the reaction ATP + (deoxyribonucleotide)n-3'-hydroxyl + 5'-phospho-(deoxyribonucleotide)m = (deoxyribonucleotide)n+m + AMP + diphosphate.. DNA ligase that seals nicks in double-stranded DNA during DNA replication, DNA recombination and DNA repair. In Streptomyces coelicolor (strain ATCC BAA-471 / A3(2) / M145), this protein is Probable DNA ligase.